Consider the following 207-residue polypeptide: Urease accessory protein UreG (207 aa).

A GTP-binding site is contributed by 16–23; that stretch reads GPVGSGKT.

The protein belongs to the SIMIBI class G3E GTPase family. UreG subfamily. In terms of assembly, homodimer. UreD, UreF and UreG form a complex that acts as a GTP-hydrolysis-dependent molecular chaperone, activating the urease apoprotein by helping to assemble the nickel containing metallocenter of UreC. The UreE protein probably delivers the nickel.

It is found in the cytoplasm. Its function is as follows. Facilitates the functional incorporation of the urease nickel metallocenter. This process requires GTP hydrolysis, probably effectuated by UreG. The chain is Urease accessory protein UreG from Cupriavidus metallidurans (strain ATCC 43123 / DSM 2839 / NBRC 102507 / CH34) (Ralstonia metallidurans).